Consider the following 773-residue polypeptide: Glucan endo-1,3-beta-D-glucosidase (773 aa).

Residues 1-194 form a beta-sandwich subdomain region; sequence MPPGAKVPQA…KNYFSIAVLP (194 aa). A GH81 domain is found at 1–647; sequence MPPGAKVPQA…HWICNLDSLG (647 aa). Residues isoleucine 31, asparagine 34, glutamine 35, tyrosine 36, and alanine 89 each coordinate Mg(2+). The interval 195-288 is alpha/beta subdomain; that stretch reads DNTVSTLTYY…QGTSFKTVYR (94 aa). Positions 298-647 are (alpha/beta)6 barrel subdomain; the sequence is DKGTYDREAL…HWICNLDSLG (350 aa). The (1,3-beta-D-glucosyl)n site is built by tyrosine 327 and lysine 331. Aspartate 365, threonine 368, glutamate 373, and lysine 376 together coordinate Ca(2+). Aspartate 402 and histidine 406 together coordinate (1,3-beta-D-glucosyl)n. Aspartate 402 is a catalytic residue. Ca(2+)-binding residues include leucine 454, arginine 455, and phenylalanine 457. The (1,3-beta-D-glucosyl)n site is built by asparagine 477, glutamate 479, and glutamate 483. Active-site residues include glutamate 479 and glutamate 483. Positions 527, 618, 619, and 621 each coordinate Mg(2+). Residues aspartate 712, asparagine 714, aspartate 716, glycine 717, lysine 718, aspartate 723, aspartate 748, isoleucine 749, asparagine 750, aspartate 752, lysine 754, and aspartate 759 each contribute to the Ca(2+) site.

Belongs to the glycosyl hydrolase 81 family. Ca(2+) is required as a cofactor. Requires Mg(2+) as cofactor.

Its subcellular location is the secreted. It catalyses the reaction Hydrolysis of (1-&gt;3)-beta-D-glucosidic linkages in (1-&gt;3)-beta-D-glucans.. Its activity is regulated as follows. Inhibited by manganese, zinc, and copper ions. In terms of biological role, cleaves internal linkages in 1,3-beta-glucan. May contribute to plant biomass degradation. In Acetivibrio thermocellus (strain ATCC 27405 / DSM 1237 / JCM 9322 / NBRC 103400 / NCIMB 10682 / NRRL B-4536 / VPI 7372) (Clostridium thermocellum), this protein is Glucan endo-1,3-beta-D-glucosidase.